The primary structure comprises 159 residues: Phospholipase A2 AP-PLA2-I (159 aa).

An N-terminal signal peptide occupies residues 1-19 (MNFLVVIVTTVSLAGAASA). The propeptide occupies 20-23 (GEIQ). Intrachain disulfides connect C51–C159, C53–C69, C68–C139, C75–C132, C85–C125, and C110–C130. Residues Y52, G54, and G56 each contribute to the Ca(2+) site. Residue H72 is part of the active site. D73 is a binding site for Ca(2+). D133 is a catalytic residue.

This sequence belongs to the phospholipase A2 family. Group I subfamily. In terms of assembly, homodimer. The cofactor is Ca(2+). Expressed by the venom gland.

Its subcellular location is the secreted. The catalysed reaction is a 1,2-diacyl-sn-glycero-3-phosphocholine + H2O = a 1-acyl-sn-glycero-3-phosphocholine + a fatty acid + H(+). In terms of biological role, starfish phospholipase A2 (PLA2) that has hemorrhagic and capillary permeability-increasing activities and hence is considered to be deeply involved in the local inflammation. Shows hemolytic activity only in the presence of phosphatidylcholine (PC). PLA2 catalyzes the calcium-dependent hydrolysis of the 2-acyl groups in 3-sn-phosphoglycerides. This is Phospholipase A2 AP-PLA2-I from Acanthaster planci (Crown-of-thorns starfish).